The primary structure comprises 169 residues: MEVERPADKQGNREKTVGFKLPDGTIRVTDKGFDYNVGRLNYKPNLDLYPEKLAHAFAKVEMKGGEFKHDFELLAKHMAEMKQTLSPEGKKLTAEQMLQVRDSLTKNFKFAAGVLSAESKDLLKSKTGTVWLSDDTLIKQFNSRDGQDFGIDEYERCQISSMLPSIYYK.

This is an uncharacterized protein from Haemophilus influenzae (strain ATCC 51907 / DSM 11121 / KW20 / Rd).